A 264-amino-acid chain; its full sequence is MAGPTTAERGARQQESSGPPRVRRFRPPRLRTIIILAVALVLVAGGTVWVLYGSNWTRLERVSVSGTDVLTPAQVREAADVPVGDPLVSVDTEAVEARLRRKLPRIDEVDVERSWPHGIGLKVTERTPVLIVQKGRNFVEVDDEGVRFATVSKAPKDVPTLELEPARSGSAAASLRRFDDDRLVREAVRVAGRLPDKVARDTRVVKVRSYDDISLELSGGRTVSWGSGEQGVRKARALTALMKATPDARHFDVSVATAPASSGS.

A disordered region spans residues M1–R24. At M1–T32 the chain is on the cytoplasmic side. The chain crosses the membrane as a helical span at residues I33–G53. Residues S54–S264 lie on the Extracellular side of the membrane. Residues T57–R126 enclose the POTRA domain.

Belongs to the FtsQ/DivIB family. FtsQ subfamily.

The protein resides in the cell membrane. Its function is as follows. Essential cell division protein. In Streptomyces coelicolor (strain ATCC BAA-471 / A3(2) / M145), this protein is Cell division protein FtsQ.